We begin with the raw amino-acid sequence, 1887 residues long: Fatty acid synthase subunit alpha (1887 aa).

Lysine 37 participates in a covalent cross-link: Glycyl lysine isopeptide (Lys-Gly) (interchain with G-Cter in ubiquitin). Serine 50 carries the phosphoserine modification. The segment at 96-120 (ELAAKEEPAKEEAPAPTPAASAPAP) is disordered. Residues 98-108 (AAKEEPAKEEA) show a composition bias toward basic and acidic residues. A Carrier domain is found at 145 to 220 (VKASLLLHVL…ETFQDTFSGA (76 aa)). Serine 180 carries the post-translational modification O-(pantetheine 4'-phosphoryl)serine. Serine 523 carries the phosphoserine modification. The tract at residues 675-874 (DKYVLITGAG…CGAIIGWTRG (200 aa)) is beta-ketoacyl reductase. At serine 958 the chain carries Phosphoserine. The Ketosynthase family 3 (KS3) domain maps to 1123–1657 (QEVIVEEDLE…QKGGQAIVVH (535 aa)). The active-site For beta-ketoacyl synthase activity is cysteine 1305. A Phosphoserine modification is found at serine 1440. Residues histidine 1542 and histidine 1583 each act as for beta-ketoacyl synthase activity in the active site. Mg(2+) is bound by residues aspartate 1772, valine 1773, and glutamate 1774. Residues 1772–1774 (DVE), tyrosine 1798, serine 1808, 1817–1827 (EAVFKSLGVKS), 1841–1844 (RVNK), and 1871–1873 (ISH) each bind acetyl-CoA. Serine 1872 and histidine 1873 together coordinate Mg(2+).

The protein belongs to the thiolase-like superfamily. Fungal fatty acid synthetase subunit alpha family. As to quaternary structure, [Alpha(6)beta(6)] hexamers of two multifunctional subunits (alpha and beta). Post-translationally, 4'-phosphopantetheine is transferred from CoA to a specific serine of the Acyl carrier domain by the C-terminal PPT domain. This modification is essential for activity because fatty acids are bound in thioester linkage to the sulfhydryl of the prosthetic group.

The catalysed reaction is acetyl-CoA + n malonyl-CoA + 2n NADPH + 4n H(+) = a long-chain-acyl-CoA + n CoA + n CO2 + 2n NADP(+).. The enzyme catalyses a fatty acyl-[ACP] + malonyl-[ACP] + H(+) = a 3-oxoacyl-[ACP] + holo-[ACP] + CO2. It carries out the reaction a (3R)-hydroxyacyl-[ACP] + NADP(+) = a 3-oxoacyl-[ACP] + NADPH + H(+). Inhibited by cerulenin by covalent binding to active site of the ketoacyl synthase (KS) region. Its function is as follows. Fatty acid synthetase catalyzes the formation of long-chain fatty acids from acetyl-CoA, malonyl-CoA and NADPH. The alpha subunit contains domains for: acyl carrier protein, 3-oxoacyl-[acyl-carrier-protein] reductase, and 3-oxoacyl-[acyl-carrier-protein] synthase. This subunit coordinates the binding of the six beta subunits to the enzyme complex. This Saccharomyces cerevisiae (strain ATCC 204508 / S288c) (Baker's yeast) protein is Fatty acid synthase subunit alpha (FAS2).